Consider the following 352-residue polypeptide: Ion-translocating oxidoreductase complex subunit D (352 aa).

The next 4 helical transmembrane spans lie at 20-40, 42-62, 89-109, and 123-143; these read IMLLVLLAAVPGIAAQLWFFG, GTLVQILLASVSALLAEALVL, IPPLAPWWMVVLGTVFAAIIA, and PAMIGYVVLLISFPVQMTSWL. Position 187 is an FMN phosphoryl threonine (Thr187). The next 5 membrane-spanning stretches (helical) occupy residues 214 to 234, 242 to 262, 267 to 287, 301 to 321, and 322 to 342; these read ILAGAGWQWVNLAWLAGGLWL, WHIPLSFLVTLALCATLGWLF, LAAPQIHLLSGATMLGAFFIL, LIFGALAGLLVWLIRSFGGYP, and DGVAFAVLLANITVPLIDYYT.

The protein belongs to the NqrB/RnfD family. The complex is composed of six subunits: RsxA, RsxB, RsxC, RsxD, RsxE and RsxG. Requires FMN as cofactor.

The protein localises to the cell inner membrane. Its function is as follows. Part of a membrane-bound complex that couples electron transfer with translocation of ions across the membrane. Required to maintain the reduced state of SoxR. This is Ion-translocating oxidoreductase complex subunit D from Escherichia coli (strain ATCC 8739 / DSM 1576 / NBRC 3972 / NCIMB 8545 / WDCM 00012 / Crooks).